Here is a 276-residue protein sequence, read N- to C-terminus: Ribosomal RNA small subunit methyltransferase A (276 aa).

The S-adenosyl-L-methionine site is built by Asn-28, Leu-30, Gly-55, Glu-77, Asp-103, and Asn-124.

The protein belongs to the class I-like SAM-binding methyltransferase superfamily. rRNA adenine N(6)-methyltransferase family. RsmA subfamily.

The protein resides in the cytoplasm. It catalyses the reaction adenosine(1518)/adenosine(1519) in 16S rRNA + 4 S-adenosyl-L-methionine = N(6)-dimethyladenosine(1518)/N(6)-dimethyladenosine(1519) in 16S rRNA + 4 S-adenosyl-L-homocysteine + 4 H(+). Its function is as follows. Specifically dimethylates two adjacent adenosines (A1518 and A1519) in the loop of a conserved hairpin near the 3'-end of 16S rRNA in the 30S particle. May play a critical role in biogenesis of 30S subunits. The sequence is that of Ribosomal RNA small subunit methyltransferase A from Agrobacterium fabrum (strain C58 / ATCC 33970) (Agrobacterium tumefaciens (strain C58)).